A 200-amino-acid chain; its full sequence is ATP synthase subunit s, mitochondrial (200 aa).

The transit peptide at Met1–Tyr25 directs the protein to the mitochondrion. Residues Met1–Met61 are N-terminal domain. Gly59 contributes to the Mg(2+) binding site. 4 LRR repeats span residues Val62–Ile87, Gln88–Leu116, Cys117–Leu141, and Glu142–Leu173. Residue Thr93 coordinates Mg(2+).

Belongs to the ATP synthase subunit s family. Homotetramer. Associates with ATP synthase.

The protein resides in the mitochondrion. The protein localises to the mitochondrion inner membrane. Functionally, involved in regulation of mitochondrial membrane ATP synthase. Necessary for H(+) conduction of ATP synthase. Facilitates energy-driven catalysis of ATP synthesis by blocking a proton leak through an alternative proton exit pathway. In Pongo abelii (Sumatran orangutan), this protein is ATP synthase subunit s, mitochondrial (DMAC2L).